The following is a 176-amino-acid chain: Crossover junction endodeoxyribonuclease RuvC (176 aa).

Residues Asp-10, Glu-69, and Asp-141 contribute to the active site. Positions 10, 69, and 141 each coordinate Mg(2+).

The protein belongs to the RuvC family. In terms of assembly, homodimer which binds Holliday junction (HJ) DNA. The HJ becomes 2-fold symmetrical on binding to RuvC with unstacked arms; it has a different conformation from HJ DNA in complex with RuvA. In the full resolvosome a probable DNA-RuvA(4)-RuvB(12)-RuvC(2) complex forms which resolves the HJ. Requires Mg(2+) as cofactor.

The protein resides in the cytoplasm. It carries out the reaction Endonucleolytic cleavage at a junction such as a reciprocal single-stranded crossover between two homologous DNA duplexes (Holliday junction).. In terms of biological role, the RuvA-RuvB-RuvC complex processes Holliday junction (HJ) DNA during genetic recombination and DNA repair. Endonuclease that resolves HJ intermediates. Cleaves cruciform DNA by making single-stranded nicks across the HJ at symmetrical positions within the homologous arms, yielding a 5'-phosphate and a 3'-hydroxyl group; requires a central core of homology in the junction. The consensus cleavage sequence is 5'-(A/T)TT(C/G)-3'. Cleavage occurs on the 3'-side of the TT dinucleotide at the point of strand exchange. HJ branch migration catalyzed by RuvA-RuvB allows RuvC to scan DNA until it finds its consensus sequence, where it cleaves and resolves the cruciform DNA. This Dichelobacter nodosus (strain VCS1703A) protein is Crossover junction endodeoxyribonuclease RuvC.